Here is an 874-residue protein sequence, read N- to C-terminus: DNA mismatch repair protein MutS (874 aa).

613–620 (GPNMGGKS) contributes to the ATP binding site. The interval 799-820 (EAGSTPSPAPVSVNEPKPAAPT) is disordered.

This sequence belongs to the DNA mismatch repair MutS family.

Its function is as follows. This protein is involved in the repair of mismatches in DNA. It is possible that it carries out the mismatch recognition step. This protein has a weak ATPase activity. This Marinobacter nauticus (strain ATCC 700491 / DSM 11845 / VT8) (Marinobacter aquaeolei) protein is DNA mismatch repair protein MutS.